The chain runs to 398 residues: Phosphoglycerate kinase (398 aa).

Residues 23 to 25, arginine 38, 61 to 64, arginine 119, and arginine 152 each bind substrate; these read DLN and HFGR. Residues lysine 202, glutamate 324, and 354–357 contribute to the ATP site; that span reads GGDT.

The protein belongs to the phosphoglycerate kinase family. In terms of assembly, monomer.

It is found in the cytoplasm. It carries out the reaction (2R)-3-phosphoglycerate + ATP = (2R)-3-phospho-glyceroyl phosphate + ADP. It participates in carbohydrate degradation; glycolysis; pyruvate from D-glyceraldehyde 3-phosphate: step 2/5. This is Phosphoglycerate kinase from Bradyrhizobium diazoefficiens (strain JCM 10833 / BCRC 13528 / IAM 13628 / NBRC 14792 / USDA 110).